A 222-amino-acid polypeptide reads, in one-letter code: Ras-related protein Rab11C (222 aa).

22 to 29 (GDSAVGKT) provides a ligand contact to GTP. The Effector region signature appears at 44-52 (SKATIGVEF). Residues 70–74 (DTAGQ) and 128–131 (NKTD) contribute to the GTP site. 2 S-geranylgeranyl cysteine lipidation sites follow: cysteine 219 and cysteine 220.

The protein belongs to the small GTPase superfamily. Rab family.

The protein resides in the cell membrane. The sequence is that of Ras-related protein Rab11C (RAB11C) from Nicotiana tabacum (Common tobacco).